Reading from the N-terminus, the 184-residue chain is Exosome complex protein LRP1 (184 aa).

Positions 157 to 184 are disordered; it reads DSTDHIRKASSKKSKRLDKVGKKKGGKK. The segment covering 164–184 has biased composition (basic residues); sequence KASSKKSKRLDKVGKKKGGKK.

It belongs to the C1D family. Associates with nuclear form of the RNA exosome complex. Interacts with RRP4, RRP6, RRP45 and RRP46.

It localises to the nucleus. Functionally, required for exosome-dependent processing of pre-rRNA and small nucleolar RNA (snRNA) precursors. Involved in processing of 35S pre-rRNA at the A0, A1 and A2 sites. Required for activity of RRP6 in 7S pre-rRNA processing. Also has a role in 3'-processing of U4 and U5 small nuclear RNAs (snRNAs). Acts as a mRNA export factor. Mediates mRNA degradation upon UV irradiation. Maintains genome integrity where it is involved in both non-homologous end joining (NHEJ) and homologous recombination pathway repair of double strand DNA breaks. During NHEJ, required for joining 3'-overhanging ends. Also involved in telomere length regulation and maintenance. This is Exosome complex protein LRP1 (LRP1) from Saccharomyces cerevisiae (strain ATCC 204508 / S288c) (Baker's yeast).